We begin with the raw amino-acid sequence, 184 residues long: Antigen Sm21.7 (184 aa).

An EF-hand domain is found at 37–72 (LDMKQVNEWIALFDVDKDQKITFEEFCRGLGLKQNE). Residues D50, D52, D54, K56, and E61 each coordinate Ca(2+).

This Schistosoma mansoni (Blood fluke) protein is Antigen Sm21.7 (SM21.7).